The primary structure comprises 575 residues: Potassium-transporting ATPase potassium-binding subunit (575 aa).

12 helical membrane passes run 3 to 23 (FEGV…VPFF), 69 to 89 (AVLA…LLQG), 136 to 156 (CFQF…IAFI), 178 to 198 (ILMP…VPQS), 266 to 286 (LLEI…FGVL), 293 to 313 (GWVL…VAAL), 340 to 360 (FGWA…TGAV), 367 to 387 (LTPL…IWGG), 391 to 411 (GIAY…LMVG), 431 to 451 (IIFL…LAIP), 498 to 518 (VVLL…AGGL), and 543 to 563 (AGTI…LGPI).

This sequence belongs to the KdpA family. In terms of assembly, the system is composed of three essential subunits: KdpA, KdpB and KdpC.

It is found in the cell inner membrane. Its function is as follows. Part of the high-affinity ATP-driven potassium transport (or Kdp) system, which catalyzes the hydrolysis of ATP coupled with the electrogenic transport of potassium into the cytoplasm. This subunit binds the periplasmic potassium ions and delivers the ions to the membrane domain of KdpB through an intramembrane tunnel. The sequence is that of Potassium-transporting ATPase potassium-binding subunit from Gloeobacter violaceus (strain ATCC 29082 / PCC 7421).